A 675-amino-acid polypeptide reads, in one-letter code: Protein brown (675 aa).

The Cytoplasmic segment spans residues 1 to 419; the sequence is MQESGGSSGQ…TEDLRNIRSG (419 aa). One can recognise an ABC transporter domain in the interval 34-261; that stretch reads YSFWNECRKK…EVVAESHESL (228 aa). 66-73 is an ATP binding site; it reads GGSGAGKT. Residues 229–249 are disordered; the sequence is EDSFETPSGESSASGSGSKSI. Positions 236–248 are enriched in low complexity; that stretch reads SGESSASGSGSKS. The helical transmembrane segment at 420 to 440 threads the bilayer; sequence LIAFGFFMITAVTLSLMYSGI. At 441–460 the chain is on the extracellular side; the sequence is GGLTQRTVQDVGGSIFMLSN. Residues 461–481 form a helical membrane-spanning segment; that stretch reads EMIFTFSYGVTYIFPAALPII. The Cytoplasmic portion of the chain corresponds to 482 to 497; that stretch reads RREVGEGTYSLSAYYV. A helical membrane pass occupies residues 498–518; it reads ALVLSFVPVAFFKGYVFLSVI. Residues 519–531 lie on the Extracellular side of the membrane; the sequence is YASIYYTRGFLLY. The chain crosses the membrane as a helical span at residues 532–552; sequence LSMGFLMSLSAVAAVGYGVFL. Topologically, residues 553-568 are cytoplasmic; that stretch reads SSLFESDKMASECAAP. Residues 569–589 traverse the membrane as a helical segment; sequence FDLIFLIFGGTYMNVDTVPGL. Over 590–644 the chain is Extracellular; it reads KYLSLFFYSNEALMYKFWIDIDNIDCPVNEDHPCIKTGVEVLQQGSYRNADYTYW. A helical membrane pass occupies residues 645–665; it reads LDCFSLVVVAVIFHIVSFGLV. Over 666–675 the chain is Cytoplasmic; it reads RRYIHRSGYY.

This sequence belongs to the ABC transporter superfamily. ABCG family. Eye pigment precursor importer (TC 3.A.1.204) subfamily. May form a heterodimer with w/white.

The protein resides in the membrane. It carries out the reaction guanine(out) + ATP + H2O = guanine(in) + ADP + phosphate + H(+). The catalysed reaction is riboflavin(in) + ATP + H2O = riboflavin(out) + ADP + phosphate + H(+). It catalyses the reaction (6S)-5,6,7,8-tetrahydrofolate(out) + ATP + H2O = (6S)-5,6,7,8-tetrahydrofolate(in) + ADP + phosphate + H(+). ATP-dependent transporter of the ATP-binding cassette (ABC) family which transports various molecules including bioamines, neurotransmitters and metabolic intermediates. In the eye and probably in association with w/white, required for the transport of the eye red pigment precursor, guanine, into pigment cell granules. In Malpighian tubules, involved in guanine uptake. Probably in association with w/white, involved in aging-induced intestinal stem cell proliferation in the midgut by regulating tetrahydrofolate transport. The chain is Protein brown from Drosophila melanogaster (Fruit fly).